Reading from the N-terminus, the 163-residue chain is ATP synthase subunit b 2 (163 aa).

The helical transmembrane segment at 5–25 (SLATLWATIALIIFLGVAIYI) threads the bilayer.

It belongs to the ATPase B chain family. F-type ATPases have 2 components, F(1) - the catalytic core - and F(0) - the membrane proton channel. F(1) has five subunits: alpha(3), beta(3), gamma(1), delta(1), epsilon(1). F(0) has three main subunits: a(1), b(2) and c(10-14). The alpha and beta chains form an alternating ring which encloses part of the gamma chain. F(1) is attached to F(0) by a central stalk formed by the gamma and epsilon chains, while a peripheral stalk is formed by the delta and b chains.

It is found in the cell inner membrane. F(1)F(0) ATP synthase produces ATP from ADP in the presence of a proton or sodium gradient. F-type ATPases consist of two structural domains, F(1) containing the extramembraneous catalytic core and F(0) containing the membrane proton channel, linked together by a central stalk and a peripheral stalk. During catalysis, ATP synthesis in the catalytic domain of F(1) is coupled via a rotary mechanism of the central stalk subunits to proton translocation. Its function is as follows. Component of the F(0) channel, it forms part of the peripheral stalk, linking F(1) to F(0). The polypeptide is ATP synthase subunit b 2 (Mesorhizobium japonicum (strain LMG 29417 / CECT 9101 / MAFF 303099) (Mesorhizobium loti (strain MAFF 303099))).